Reading from the N-terminus, the 1337-residue chain is Zinc finger protein 335 (1337 aa).

Disordered stretches follow at residues methionine 1–serine 108 and glycine 198–proline 226. Composition is skewed to low complexity over residues threonine 31–valine 45 and serine 54–glycine 63. Residues phenylalanine 248–histidine 271 form a C2H2-type 1 zinc finger. A disordered region spans residues alanine 278–arginine 444. The span at aspartate 302–glutamate 332 shows a compositional bias: acidic residues. Positions arginine 351–leucine 362 are enriched in basic residues. The segment covering proline 363–aspartate 372 has biased composition (basic and acidic residues). Polar residues predominate over residues leucine 378–proline 388. C2H2-type zinc fingers lie at residues tyrosine 466 to histidine 488, phenylalanine 496 to histidine 518, tyrosine 524 to histidine 546, phenylalanine 563 to histidine 585, histidine 591 to histidine 613, phenylalanine 622 to histidine 644, phenylalanine 650 to histidine 673, and phenylalanine 679 to histidine 702. Disordered regions lie at residues leucine 733–leucine 767 and glutamine 963–threonine 999. The segment covering proline 741–proline 756 has biased composition (pro residues). Serine 976 and serine 1007 each carry phosphoserine. 4 C2H2-type zinc fingers span residues phenylalanine 1019 to histidine 1041, phenylalanine 1047 to histidine 1069, histidine 1075 to histidine 1097, and phenylalanine 1103 to histidine 1126. Residue lysine 1022 forms a Glycyl lysine isopeptide (Lys-Gly) (interchain with G-Cter in SUMO2) linkage. Position 1149 is a phosphoserine (serine 1149).

Belongs to the krueppel C2H2-type zinc-finger protein family. Interacts with NCOA6; may enhance ligand-dependent transcriptional activation by nuclear hormone receptors. Interacts with CNOT6. Interacts with CNOT9; the interaction is direct. Component of a nuclear receptor-mediated transcription complex composed of at least ZNF335, CCAR2 and EMSY; the complex stimulates the transcription of nuclear receptor target genes such as SOX9 and HOXA1. Within the complex interacts with EMSY and interacts (via C-terminus) with CCAR2. Interacts with members of histone H3'Lys4'(H3K4) methyltransferase complexes ASH2L, CXXC1, KMT2A/MLL1, RBBP5, SETD1A and WDR5. Component of a histone methylation complex composed of at least ZNF335, RBBP5, ASH2L and WDR5; the complex may have histone H3-specific methyltransferase activity, however does not have specificity for 'Lys-4' of histone H3. Interacts with RBBP5 and WDR5. Interacts with ASHL2. Components of this complex may associate with components of the ZNF335-CCAR2-EMSY nuclear receptor-mediated transcription complex to form a complex at least composed of ZNF335, HCFC1, CCAR2, EMSY, MKI67, RBBP5, ASH2L and WDR5. Within this complex also interacts with HCFC1 and MKI67. Expressed at low levels in cerebral cortex, hippocampus and cerebellum (at protein level).

The protein resides in the nucleus. In terms of biological role, component or associated component of some histone methyltransferase complexes may regulate transcription through recruitment of those complexes on gene promoters. Enhances ligand-dependent transcriptional activation by nuclear hormone receptors. Plays an important role in neural progenitor cell proliferation and self-renewal through the regulation of specific genes involved brain development, including REST. Also controls the expression of genes involved in somatic development and regulates, for instance, lymphoblast proliferation. The chain is Zinc finger protein 335 (Znf335) from Mus musculus (Mouse).